The primary structure comprises 1485 residues: Glutamate receptor ionotropic, NMDA 2B (1485 aa).

An N-terminal signal peptide occupies residues 1-26 (MKPRAECCSPKFWLVLAVLAVSGSRA). The Extracellular portion of the chain corresponds to 27–557 (RSQKSPPSIG…SAFLEPFSAD (531 aa)). N74 carries N-linked (GlcNAc...) asparagine glycosylation. C86 and C321 form a disulfide bridge. Residues H127 and E284 each coordinate Zn(2+). N341, N348, N444, and N491 each carry an N-linked (GlcNAc...) asparagine glycan. 2 disulfide bridges follow: C429–C456 and C436–C457. Residues T514 and R519 each contribute to the L-glutamate site. N-linked (GlcNAc...) asparagine glycosylation is present at N542. A helical membrane pass occupies residues 558–576 (VWVMMFVMLLIVSAVAVFV). The Cytoplasmic portion of the chain corresponds to 577–603 (FEYFSPVGYNRCLADGREPGGPSFTIG). Residues 604–623 (KAIWLLWGLVFNNSVPVQNP) constitute an intramembrane region (discontinuously helical). A pore-forming region spans residues 604–623 (KAIWLLWGLVFNNSVPVQNP). At 624–630 (KGTTSKI) the chain is on the cytoplasmic side. Residues 631-646 (MVSVWAFFAVIFLASY) form a helical membrane-spanning segment. At 647–817 (TANLAAFMIQ…VMSSQLDIDN (171 aa)) the chain is on the extracellular side. N688 carries an N-linked (GlcNAc...) asparagine glycan. L-glutamate-binding positions include 690 to 691 (ST) and D732. A disulfide bond links C746 and C801. The helical transmembrane segment at 818 to 837 (MAGVFYMLGAAMALSLITFI) threads the bilayer. Topologically, residues 838–1485 (CEHLFYWQFR…EKLSSIESDV (648 aa)) are cytoplasmic. 4 positions are modified to phosphoserine: S882, S886, S917, and S920. Residues Y962 and Y1039 each carry the phosphotyrosine modification. A phosphoserine mark is found at S1058, S1061, and S1064. Residues 1074 to 1097 (EGNAAKRRKQQYKDSLKKRPASAK) are disordered. A phosphotyrosine mark is found at Y1109 and Y1133. S1143 bears the Phosphoserine mark. Phosphotyrosine is present on Y1155. A disordered region spans residues 1162–1194 (FKRDSVSGGGPCTNRSHLKHGAGDKHGVVSGVP). Phosphoserine is present on residues S1255 and S1259. The segment covering 1269 to 1278 (PVAVPSNAPS) has biased composition (low complexity). The segment at 1269–1302 (PVAVPSNAPSTKYPQSPTNSKAQKKTRNKLRRQH) is disordered. Residues 1280 to 1289 (KYPQSPTNSK) are compositionally biased toward polar residues. Basic residues predominate over residues 1290–1301 (AQKKTRNKLRRQ). The interval 1292–1304 (KKTRNKLRRQHSY) is interaction with DAPK1. Position 1303 is a phosphoserine; by DAPK1 (S1303). Phosphotyrosine is present on Y1475. Residues 1483–1485 (SDV) carry the PDZ-binding motif.

It belongs to the glutamate-gated ion channel (TC 1.A.10.1) family. NR2B/GRIN2B subfamily. Heterotetramer. Forms heterotetrameric channels composed of two GluN1/zeta subunits (GRIN1), and two identical GluN2/epsilon subunits (GRIN2A, GRIN2B, GRIN2C or GRIN2D) or GluN3 subunits (GRIN3A or GRIN3B) (in vitro). Can also form heterotetrameric channels that contain at least two GluN1 subunits and at least two different GluN2 subunits (or a combination of one GluN2 and one GluN3 subunits) (in vitro). In vivo, the subunit composition may depend on the expression levels of the different subunits. Found in a complex with GRIN1, GRIN3A and PPP2CB. Found in a complex with GRIN1 and GRIN3B. Interacts with MAGI3. Interacts with HIP1 and Neto1. Interacts with PDZ domains of PATJ, DLG3 and DLG4. Interacts with DAPK1. Found in a complex with GRIN1 and PRR7. Interacts with PRR7. Interacts with CAMK2A. Interacts with ARC; preventing ARC oligomerization. Interacts with TMEM25. Interacts (via the extreme C-terminus) with FRMPD2 (via the second PDZ domain); the interaction is direct and is likely to promote NMDAR-mediated neural signal transmission. Interacts with FAM81A; the interaction facilitates condensate formation via liquid-liquid phase separation. In terms of processing, phosphorylated on tyrosine residues. Phosphorylation at Ser-1303 by DAPK1 enhances synaptic NMDA receptor channel activity.

It localises to the cell membrane. The protein localises to the postsynaptic cell membrane. The protein resides in the cell projection. It is found in the dendrite. Its subcellular location is the late endosome. It localises to the lysosome. The protein localises to the cytoplasm. The protein resides in the cytoskeleton. It carries out the reaction Ca(2+)(in) = Ca(2+)(out). The enzyme catalyses Na(+)(in) = Na(+)(out). It catalyses the reaction K(+)(in) = K(+)(out). Component of N-methyl-D-aspartate (NMDA) receptors (NMDARs) that function as heterotetrameric, ligand-gated cation channels with high calcium permeability and voltage-dependent block by Mg(2+). Participates in synaptic plasticity for learning and memory formation by contributing to the long-term depression (LTD) of hippocampus membrane currents. Channel activation requires binding of the neurotransmitter L-glutamate to the GluN2 subunit, glycine or D-serine binding to the GluN1 subunit, plus membrane depolarization to eliminate channel inhibition by Mg(2+). NMDARs mediate simultaneously the potasium efflux and the influx of calcium and sodium. Each GluN2 subunit confers differential attributes to channel properties, including activation, deactivation and desensitization kinetics, pH sensitivity, Ca2(+) permeability, and binding to allosteric modulators. In concert with DAPK1 at extrasynaptic sites, acts as a central mediator for stroke damage. Its phosphorylation at Ser-1303 by DAPK1 enhances synaptic NMDA receptor channel activity inducing injurious Ca2+ influx through them, resulting in an irreversible neuronal death. The chain is Glutamate receptor ionotropic, NMDA 2B from Canis lupus familiaris (Dog).